We begin with the raw amino-acid sequence, 233 residues long: Cell surface glycoprotein gp42 (233 aa).

The signal sequence occupies residues 1–16; sequence MLLWMVLLLCVSMTEA. Ig-like domains are found at residues 23 to 98 and 115 to 195; these read PVLS…GTIQ and PVLT…RDIS. N-linked (GlcNAc...) asparagine glycosylation is found at N29, N66, and N181. Cystine bridges form between C40/C88 and C136/C184. G206 carries the GPI-anchor amidated glycine lipid modification. Residues 207–233 constitute a propeptide, removed in mature form; sequence TASMKSTTVVIWLPVSCLVGWPWLLRF.

NK cells.

The protein localises to the cell membrane. The chain is Cell surface glycoprotein gp42 from Rattus norvegicus (Rat).